We begin with the raw amino-acid sequence, 654 residues long: Protein fem-1 homolog A (654 aa).

ANK repeat units follow at residues 2 to 31, 40 to 70, 82 to 111, 115 to 145, 149 to 178, 182 to 211, and 214 to 243; these read DLHT…REEI, GGGT…SVEA, EGAP…SVNR, TNST…DLEV, HGHT…QVNR, KGNT…RMER, and YGMT…GHGQ. Ser-108 bears the Phosphoserine mark. The disordered stretch occupies residues 241-265; it reads HGQLSGTELPGEGSSQMAGNHCSTP. Positions 253–263 are enriched in polar residues; that stretch reads GSSQMAGNHCS. TPR repeat units follow at residues 283–317 and 375–408; these read VEAL…RHQG and SYYI…QQNN. ANK repeat units follow at residues 519–561 and 565–594; these read NGFT…DPDS and DNNT…HMDA. Position 608 is a phosphoserine (Ser-608).

This sequence belongs to the fem-1 family. Component of a CRL2 E3 ubiquitin-protein ligase complex, also named ECS (Elongin BC-CUL2/5-SOCS-box protein) complex, composed of CUL2, Elongin BC (ELOB and ELOC), RBX1 and substrate-specific adapter FEM1A. Interacts with PTGER4. Interacts with NFKB1; the interaction is direct. Post-translationally, phosphorylated; highly phosphorylated in myoblasts and myotubes. Phosphorylation at Ser-108 and Ser-608 promote PGE2-EP4-mediated inhibition of inflammation. Dephosphorylated by protein phosphatase 2A (PP2A).

It localises to the mitochondrion. The protein localises to the cytoplasm. The protein operates within protein modification; protein ubiquitination. Its function is as follows. Substrate-recognition component of a Cul2-RING (CRL2) E3 ubiquitin-protein ligase complex of the DesCEND (destruction via C-end degrons) pathway, which recognizes a C-degron located at the extreme C terminus of target proteins, leading to their ubiquitination and degradation. The C-degron recognized by the DesCEND pathway is usually a motif of less than ten residues and can be present in full-length proteins, truncated proteins or proteolytically cleaved forms. The CRL2(FEM1A) complex specifically recognizes proteins with an arginine at the C-terminus: recognizes and binds proteins ending with -Lys/Arg-Xaa-Arg and -Lys/Arg-Xaa-Xaa-Arg C-degrons, such as SIL1 or OR51B2, leading to their ubiquitination and degradation. Involved in PGE2-EP4-mediated inhibition of inflammation of macrophages via interaction with NFKB1 and PTGER4. Promotes inflammation in brain microglia through MAP2K4/MKK4-mediated signaling. The sequence is that of Protein fem-1 homolog A from Rattus norvegicus (Rat).